The following is a 237-amino-acid chain: Phosphoribosylaminoimidazole-succinocarboxamide synthase (237 aa).

This sequence belongs to the SAICAR synthetase family.

The enzyme catalyses 5-amino-1-(5-phospho-D-ribosyl)imidazole-4-carboxylate + L-aspartate + ATP = (2S)-2-[5-amino-1-(5-phospho-beta-D-ribosyl)imidazole-4-carboxamido]succinate + ADP + phosphate + 2 H(+). It functions in the pathway purine metabolism; IMP biosynthesis via de novo pathway; 5-amino-1-(5-phospho-D-ribosyl)imidazole-4-carboxamide from 5-amino-1-(5-phospho-D-ribosyl)imidazole-4-carboxylate: step 1/2. The protein is Phosphoribosylaminoimidazole-succinocarboxamide synthase of Enterobacter sp. (strain 638).